The sequence spans 543 residues: Chaperonin GroEL (543 aa).

Residues Thr29–Pro32, Lys50, Asp86–Thr90, Gly415, and Asp495 each bind ATP.

This sequence belongs to the chaperonin (HSP60) family. As to quaternary structure, forms a cylinder of 14 subunits composed of two heptameric rings stacked back-to-back. Interacts with the co-chaperonin GroES.

Its subcellular location is the cytoplasm. It carries out the reaction ATP + H2O + a folded polypeptide = ADP + phosphate + an unfolded polypeptide.. Its function is as follows. Together with its co-chaperonin GroES, plays an essential role in assisting protein folding. The GroEL-GroES system forms a nano-cage that allows encapsulation of the non-native substrate proteins and provides a physical environment optimized to promote and accelerate protein folding. In Karelsulcia muelleri (strain GWSS) (Sulcia muelleri), this protein is Chaperonin GroEL.